Here is a 301-residue protein sequence, read N- to C-terminus: Ribosomal protein L11 methyltransferase (301 aa).

S-adenosyl-L-methionine-binding residues include Thr146, Gly167, Asp189, and Asn237.

It belongs to the methyltransferase superfamily. PrmA family.

It is found in the cytoplasm. It catalyses the reaction L-lysyl-[protein] + 3 S-adenosyl-L-methionine = N(6),N(6),N(6)-trimethyl-L-lysyl-[protein] + 3 S-adenosyl-L-homocysteine + 3 H(+). Functionally, methylates ribosomal protein L11. The chain is Ribosomal protein L11 methyltransferase from Prochlorococcus marinus (strain MIT 9303).